The sequence spans 384 residues: 8-amino-7-oxononanoate synthase (384 aa).

Arginine 21 is a binding site for substrate. Glycine 108–phenylalanine 109 serves as a coordination point for pyridoxal 5'-phosphate. Histidine 133 is a binding site for substrate. Residues serine 179, histidine 207, and threonine 233 each contribute to the pyridoxal 5'-phosphate site. The residue at position 236 (lysine 236) is an N6-(pyridoxal phosphate)lysine. Threonine 352 is a binding site for substrate.

Belongs to the class-II pyridoxal-phosphate-dependent aminotransferase family. BioF subfamily. In terms of assembly, homodimer. It depends on pyridoxal 5'-phosphate as a cofactor.

The catalysed reaction is 6-carboxyhexanoyl-[ACP] + L-alanine + H(+) = (8S)-8-amino-7-oxononanoate + holo-[ACP] + CO2. It participates in cofactor biosynthesis; biotin biosynthesis. Functionally, catalyzes the decarboxylative condensation of pimeloyl-[acyl-carrier protein] and L-alanine to produce 8-amino-7-oxononanoate (AON), [acyl-carrier protein], and carbon dioxide. This chain is 8-amino-7-oxononanoate synthase, found in Shigella boydii serotype 18 (strain CDC 3083-94 / BS512).